A 198-amino-acid polypeptide reads, in one-letter code: Large ribosomal subunit protein bL9 (198 aa).

The protein belongs to the bacterial ribosomal protein bL9 family.

Functionally, binds to the 23S rRNA. The sequence is that of Large ribosomal subunit protein bL9 from Bartonella tribocorum (strain CIP 105476 / IBS 506).